The primary structure comprises 101 residues: UPF0235 protein MmarC5_0538 (101 aa).

The protein belongs to the UPF0235 family.

The chain is UPF0235 protein MmarC5_0538 from Methanococcus maripaludis (strain C5 / ATCC BAA-1333).